The sequence spans 119 residues: Ribosome-binding factor A (119 aa).

This sequence belongs to the RbfA family. Monomer. Binds 30S ribosomal subunits, but not 50S ribosomal subunits or 70S ribosomes.

Its subcellular location is the cytoplasm. One of several proteins that assist in the late maturation steps of the functional core of the 30S ribosomal subunit. Associates with free 30S ribosomal subunits (but not with 30S subunits that are part of 70S ribosomes or polysomes). Required for efficient processing of 16S rRNA. May interact with the 5'-terminal helix region of 16S rRNA. This chain is Ribosome-binding factor A, found in Mycoplasmoides gallisepticum (strain R(low / passage 15 / clone 2)) (Mycoplasma gallisepticum).